We begin with the raw amino-acid sequence, 186 residues long: UPF0301 protein Tgr7_2910 (186 aa).

It belongs to the UPF0301 (AlgH) family.

The chain is UPF0301 protein Tgr7_2910 from Thioalkalivibrio sulfidiphilus (strain HL-EbGR7).